The sequence spans 420 residues: F-box/LRR-repeat protein At2g43260 (420 aa).

Positions 7 to 53 constitute an F-box domain; that stretch reads NPNSIDILPELLEEVLLRLPTKSILKCRIVSKQWRSLLESSRFAERH. LRR repeat units follow at residues 112 to 135 and 226 to 251; these read QDWIIVLNPSTSQLRRFPSGLNHN and VYRILALDLHKEEFHKVPVPPTQITV.

This chain is F-box/LRR-repeat protein At2g43260, found in Arabidopsis thaliana (Mouse-ear cress).